The primary structure comprises 214 residues: External core antigen (214 aa).

A signal peptide spans 1–19 (MQLFHLCLIISCTCPTVQA). The interval 25 to 27 (GWL) is HBEAG. A disordered region spans residues 165–214 (NAPILSTLPETTVVRRRDRGRSPRRRTPSPRRRRSQSPRRRRSQSRESQC). Over residues 178–207 (VRRRDRGRSPRRRTPSPRRRRSQSPRRRRS) the composition is skewed to basic residues. The stretch at 186–192 (SPRRRTP) is one 1; half-length repeat. The interval 186-208 (SPRRRTPSPRRRRSQSPRRRRSQ) is 3 X 8 AA repeats of S-P-R-R-R-R-S-Q. The propeptide occupies 186–214 (SPRRRTPSPRRRRSQSPRRRRSQSRESQC). Tandem repeats lie at residues 193–200 (SPRRRRSQ) and 201–208 (SPRRRRSQ).

Belongs to the orthohepadnavirus precore antigen family. In terms of assembly, homodimerizes. Phosphorylated. In terms of processing, cleaved by host furin.

Its subcellular location is the secreted. The protein localises to the host nucleus. Functionally, may regulate immune response to the intracellular capsid in acting as a T-cell tolerogen, by having an immunoregulatory effect which prevents destruction of infected cells by cytotoxic T-cells. This immune regulation may predispose to chronicity during perinatal infections and prevent severe liver injury during adult infections. This chain is External core antigen, found in Hepatitis B virus genotype A2 subtype adw2 (isolate Germany/991/1990) (HBV-A).